We begin with the raw amino-acid sequence, 72 residues long: Large ribosomal subunit protein bL31 (72 aa).

Zn(2+) is bound by residues Cys16, Cys18, Cys38, and Cys41.

This sequence belongs to the bacterial ribosomal protein bL31 family. Type A subfamily. Part of the 50S ribosomal subunit. Requires Zn(2+) as cofactor.

Binds the 23S rRNA. The polypeptide is Large ribosomal subunit protein bL31 (Vibrio campbellii (strain ATCC BAA-1116)).